A 351-amino-acid chain; its full sequence is UDP-N-acetylglucosamine--N-acetylmuramyl-(pentapeptide) pyrophosphoryl-undecaprenol N-acetylglucosamine transferase (351 aa).

Residues 13–15 (TGG), Asn125, Arg161, Ser189, Ile241, 260–265 (ALTVCE), and Gln285 contribute to the UDP-N-acetyl-alpha-D-glucosamine site.

It belongs to the glycosyltransferase 28 family. MurG subfamily.

The protein localises to the cell inner membrane. It catalyses the reaction di-trans,octa-cis-undecaprenyl diphospho-N-acetyl-alpha-D-muramoyl-L-alanyl-D-glutamyl-meso-2,6-diaminopimeloyl-D-alanyl-D-alanine + UDP-N-acetyl-alpha-D-glucosamine = di-trans,octa-cis-undecaprenyl diphospho-[N-acetyl-alpha-D-glucosaminyl-(1-&gt;4)]-N-acetyl-alpha-D-muramoyl-L-alanyl-D-glutamyl-meso-2,6-diaminopimeloyl-D-alanyl-D-alanine + UDP + H(+). It functions in the pathway cell wall biogenesis; peptidoglycan biosynthesis. In terms of biological role, cell wall formation. Catalyzes the transfer of a GlcNAc subunit on undecaprenyl-pyrophosphoryl-MurNAc-pentapeptide (lipid intermediate I) to form undecaprenyl-pyrophosphoryl-MurNAc-(pentapeptide)GlcNAc (lipid intermediate II). This Haemophilus influenzae (strain 86-028NP) protein is UDP-N-acetylglucosamine--N-acetylmuramyl-(pentapeptide) pyrophosphoryl-undecaprenol N-acetylglucosamine transferase.